We begin with the raw amino-acid sequence, 108 residues long: Ig kappa chain V region GOM (108 aa).

A framework-1 region spans residues 1 to 23 (DIVMTQTPLSLSVSPGEPASISC). The cysteines at positions 23 and 88 are disulfide-linked. The tract at residues 24-34 (RSSQSNLDYLN) is complementarity-determining-1. The segment at 35-49 (WYLQKAGQSPRLLPE) is framework-2. The disordered stretch occupies residues 44-66 (PRLLPEQDSQRASGVPDRFSGSG). The tract at residues 50–56 (QDSQRAS) is complementarity-determining-2. Residues 57 to 88 (GVPDRFSGSGSGTDFTLRIGRVEAEDAGIYYC) are framework-3. The tract at residues 89–97 (MQRSFYPYT) is complementarity-determining-3. The interval 98–107 (FGQGTRLEVR) is framework-4.

In Canis lupus familiaris (Dog), this protein is Ig kappa chain V region GOM.